A 149-amino-acid polypeptide reads, in one-letter code: 3-dehydroquinate dehydratase (149 aa).

Residue Tyr-26 is the Proton acceptor of the active site. Substrate contacts are provided by Asn-75, His-81, and Asp-88. Catalysis depends on His-101, which acts as the Proton donor. Substrate-binding positions include 102 to 103 and Arg-112; that span reads LS.

It belongs to the type-II 3-dehydroquinase family. Homododecamer.

The enzyme catalyses 3-dehydroquinate = 3-dehydroshikimate + H2O. It functions in the pathway metabolic intermediate biosynthesis; chorismate biosynthesis; chorismate from D-erythrose 4-phosphate and phosphoenolpyruvate: step 3/7. Functionally, catalyzes a trans-dehydration via an enolate intermediate. This Shewanella woodyi (strain ATCC 51908 / MS32) protein is 3-dehydroquinate dehydratase.